The sequence spans 500 residues: MKVTSGPAFALCSLLLLLLLLLQVPDSLSLVPQPRGHLCRTRPTDLVFVVDSSRSVRPVEFEKVKVFLSQVIESLDVGPNATRVGLVNYASTVKPEFPLRAHGSKASLLQAVRRIQPLSTGTMTGLALQFAITKALSDAEGGRARSPDISKVVIVVTDGRPQDSVRDVSERARASGIELFAIGVGRVDKATLRQIASEPQDEHVDYVESYNVIEKLAKKFQEAFCVVSDLCATGDHDCEQLCVSSPGSYTCACHEGFTLNSDGKTCNVCRGGGSGSATDLVFLIDGSKSVRPENFELVKKFINQIVDTLDVSDRLAQVGLVQYSSSIRQEFPLGRFHTKKDIKAAVRNMSYMEKGTMTGAALKYLIDNSFTVSSGARPGAQKVGIVFTDGRSQDYINDAARKAKDLGFKMFAVGVGNAVEEELREIASEPVADHYFYTADFKTINQIGKKLQKQICVEEDPCACESILKFEAKVEGLLQALTRKLEAVSGRLAVLENRII.

The signal sequence occupies residues 1 to 29 (MKVTSGPAFALCSLLLLLLLLLQVPDSLS). Residues 30-226 (LVPQPRGHLC…AKKFQEAFCV (197 aa)) enclose the VWFA 1 domain. N80 is a glycosylation site (N-linked (GlcNAc...) asparagine). One can recognise an EGF-like domain in the interval 227 to 267 (VSDLCATGDHDCEQLCVSSPGSYTCACHEGFTLNSDGKTCN). Cystine bridges form between C231-C242, C238-C251, and C253-C266. The 190-residue stretch at 268-457 (VCRGGGSGSA…GKKLQKQICV (190 aa)) folds into the VWFA 2 domain. The N-linked (GlcNAc...) asparagine glycan is linked to N348. The stretch at 471–499 (EAKVEGLLQALTRKLEAVSGRLAVLENRI) forms a coiled coil.

As to quaternary structure, homotrimer. Part of a complex composed of MATN1 (via VWFA1 domain), type 2 collagens and type 6 collagens. Forms a complex (via covalent bonds) with ACAN; the interaction increases in abundance with increasing age of the organism via an increase in occupancy of MATN1 binding sites. Interacts with COMP. In terms of processing, N-glycosylated; reduces binding affinity for type 2 collagens. As to expression, expressed in femoral head articular cartilage. Expressed in the trachea and extraskeletal tissue around the eye.

It is found in the secreted. It localises to the extracellular space. The protein localises to the extracellular matrix. Its function is as follows. A major component of the extracellular matrix of non-articular cartilage. Binds to type 2 collagens and forms long concatenated protein networks as part of the extracellular matrix. Required for the network-like organization and bundling of collagen fibrils surrounding chondrocytes in the zones of maturation and hypertrophy. Required for mechanotransduction and adaption to mechanical loading in cartilage chondrocytes, resulting in an increase in expression of the extracellular matrix components ACAN and COL2A1. Acts as a moderator of angiogenesis in response to injury. This Mus musculus (Mouse) protein is Matrilin-1.